Consider the following 694-residue polypeptide: Elongation factor G (694 aa).

The tr-type G domain occupies 8 to 287; the sequence is EDYRNFGIMA…AVVEFLPAPT (280 aa). Residues 17-24, 86-90, and 140-143 contribute to the GTP site; these read AHIDAGKT, DTPGH, and NKMD.

Belongs to the TRAFAC class translation factor GTPase superfamily. Classic translation factor GTPase family. EF-G/EF-2 subfamily.

Its subcellular location is the cytoplasm. Its function is as follows. Catalyzes the GTP-dependent ribosomal translocation step during translation elongation. During this step, the ribosome changes from the pre-translocational (PRE) to the post-translocational (POST) state as the newly formed A-site-bound peptidyl-tRNA and P-site-bound deacylated tRNA move to the P and E sites, respectively. Catalyzes the coordinated movement of the two tRNA molecules, the mRNA and conformational changes in the ribosome. This chain is Elongation factor G, found in Brucella suis (strain ATCC 23445 / NCTC 10510).